The primary structure comprises 237 residues: 7-cyano-7-deazaguanine synthase (237 aa).

Phenylalanine 10 to leucine 20 provides a ligand contact to ATP. Positions 189, 198, 201, and 204 each coordinate Zn(2+).

The protein belongs to the QueC family. The cofactor is Zn(2+).

The catalysed reaction is 7-carboxy-7-deazaguanine + NH4(+) + ATP = 7-cyano-7-deazaguanine + ADP + phosphate + H2O + H(+). It participates in purine metabolism; 7-cyano-7-deazaguanine biosynthesis. Its function is as follows. Catalyzes the ATP-dependent conversion of 7-carboxy-7-deazaguanine (CDG) to 7-cyano-7-deazaguanine (preQ(0)). This Aeromonas salmonicida (strain A449) protein is 7-cyano-7-deazaguanine synthase.